The primary structure comprises 357 residues: Peptide chain release factor 1 (357 aa).

At Gln-235 the chain carries N5-methylglutamine. A compositionally biased stretch (basic and acidic residues) spans 282–294; the sequence is RQKADTERSESRR. Residues 282-308 form a disordered region; that stretch reads RQKADTERSESRRSQVGSGDRSERIRT.

It belongs to the prokaryotic/mitochondrial release factor family. Post-translationally, methylated by PrmC. Methylation increases the termination efficiency of RF1.

The protein resides in the cytoplasm. Its function is as follows. Peptide chain release factor 1 directs the termination of translation in response to the peptide chain termination codons UAG and UAA. In Brucella anthropi (strain ATCC 49188 / DSM 6882 / CCUG 24695 / JCM 21032 / LMG 3331 / NBRC 15819 / NCTC 12168 / Alc 37) (Ochrobactrum anthropi), this protein is Peptide chain release factor 1.